A 278-amino-acid polypeptide reads, in one-letter code: Sulfide dehydrogenase subunit beta (278 aa).

Positions 1–4 (MFKI) are excised as a propeptide. Residues 1-95 (MFKILRKERL…LGPLGKPSHI (95 aa)) enclose the FAD-binding FR-type domain. [2Fe-2S] cluster contacts are provided by Cys222, Cys225, and Cys237.

As to quaternary structure, heterodimer of alpha and beta subunits. It depends on FAD as a cofactor. [2Fe-2S] cluster serves as cofactor.

The protein resides in the cytoplasm. It carries out the reaction n sulfur + hydrogen sulfide + NADP(+) = (n+1) sulfur + NADPH. The catalysed reaction is 2 reduced [2Fe-2S]-[ferredoxin] + NADP(+) + H(+) = 2 oxidized [2Fe-2S]-[ferredoxin] + NADPH. A bifunctional enzyme that catalyzes the reduction of elemental sulfur or polysulfide to hydrogen sulfide with NADPH as electron donor. Also functions as a reduced ferredoxin:NADP oxidoreductase with a very high affinity for reduced ferredoxin. Exhibits a broad specificity for various physiological and non-physiological substrates with varied reduction potentials such as methyl viologen, benzyl viologen, FAD, FMN, methylene blue, 2,6-dichlorophenolindophenol (DCIP), cytochrome C and ferricyanide with highest preference for benzyl viologen. Does not reduce fumarate, succinate, nitrate, nitrite, sulfate, sulfite or protons. Does not possess any hydrogenase activity or NADPH-dependent glutamate synthase activity. The polypeptide is Sulfide dehydrogenase subunit beta (Pyrococcus furiosus (strain ATCC 43587 / DSM 3638 / JCM 8422 / Vc1)).